The chain runs to 125 residues: MQKKHGITNMQKKHCITYIQSTFGNTIITLTDYNGNTKTWSSSGSVGFKGSRRSTNYAAQATAENAARVAIQLGFKFVEVRIKGLGYGKESSLRGLKLGGLIITKIRDVTPTPHNGCRPPKKRRV.

It belongs to the universal ribosomal protein uS11 family.

The protein resides in the mitochondrion. The chain is Small ribosomal subunit protein uS11m (RPS11) from Marchantia polymorpha (Common liverwort).